The chain runs to 244 residues: Protein crossbronx (244 aa).

Residues 20 to 176 (QQEYKILAEY…VQENIKESKE (157 aa)) form the UBC core domain. Residues 209 to 244 (AGRSKQTEPSAQQGNGGHATGLSWVKEGEFKPLSIE) form a disordered region.

It belongs to the ubiquitin-conjugating enzyme family. FTS subfamily.

The polypeptide is Protein crossbronx (cbx) (Drosophila sechellia (Fruit fly)).